We begin with the raw amino-acid sequence, 284 residues long: RAD52 motif-containing protein 1 (284 aa).

The tract at residues Met-1–Lys-92 is necessary for nuclear localization and for nucleolar accumulation in response to heat shock. The RRM domain maps to Lys-15–Arg-98. Positions Pro-90–Lys-133 are necessary for nuclear and nucleolar localization.

In terms of assembly, homodimer.

It localises to the nucleus. The protein localises to the cytoplasm. It is found in the nucleolus. The protein resides in the cajal body. Its subcellular location is the PML body. Functionally, may confer resistance to the antitumor agent cisplatin. Binds to DNA and RNA. This Macaca fascicularis (Crab-eating macaque) protein is RAD52 motif-containing protein 1 (RDM1).